A 106-amino-acid polypeptide reads, in one-letter code: YcgL domain-containing protein HCH_02617 (106 aa).

In terms of domain architecture, YcgL spans 6 to 90 (RLISIFRSSK…VQDDYMMDVV (85 aa)).

The sequence is that of YcgL domain-containing protein HCH_02617 from Hahella chejuensis (strain KCTC 2396).